Consider the following 591-residue polypeptide: CTP synthase 1-B (591 aa).

The Glutamine amidotransferase type-1 domain maps to 300 to 554; the sequence is SIALVGKYTK…LASVGRLSQY (255 aa). Catalysis depends on for GATase activity residues Cys-399, His-526, and Glu-528. Basic and acidic residues predominate over residues 562-572; sequence SPRDTYSDRSE. Residues 562–581 form a disordered region; that stretch reads SPRDTYSDRSENSSPDAEIA.

This sequence belongs to the CTP synthase family.

The enzyme catalyses UTP + L-glutamine + ATP + H2O = CTP + L-glutamate + ADP + phosphate + 2 H(+). Its pathway is pyrimidine metabolism; CTP biosynthesis via de novo pathway; CTP from UDP: step 2/2. In terms of biological role, this enzyme is involved in the de novo synthesis of CTP, a precursor of DNA, RNA and phospholipids. Catalyzes the ATP-dependent amination of UTP to CTP with either L-glutamine or ammonia as a source of nitrogen. The polypeptide is CTP synthase 1-B (ctps1-b) (Xenopus laevis (African clawed frog)).